The chain runs to 336 residues: tRNA N6-adenosine threonylcarbamoyltransferase (336 aa).

Residues histidine 112 and histidine 116 each contribute to the Fe cation site. Substrate is bound by residues 136–140 (LVSGG), aspartate 169, glycine 182, and asparagine 276. Aspartate 304 is a binding site for Fe cation.

It belongs to the KAE1 / TsaD family. Fe(2+) serves as cofactor.

It localises to the cytoplasm. The catalysed reaction is L-threonylcarbamoyladenylate + adenosine(37) in tRNA = N(6)-L-threonylcarbamoyladenosine(37) in tRNA + AMP + H(+). Its function is as follows. Required for the formation of a threonylcarbamoyl group on adenosine at position 37 (t(6)A37) in tRNAs that read codons beginning with adenine. Is involved in the transfer of the threonylcarbamoyl moiety of threonylcarbamoyl-AMP (TC-AMP) to the N6 group of A37, together with TsaE and TsaB. TsaD likely plays a direct catalytic role in this reaction. The sequence is that of tRNA N6-adenosine threonylcarbamoyltransferase from Francisella tularensis subsp. holarctica (strain LVS).